Consider the following 359-residue polypeptide: GDSL esterase/lipase At5g03610 (359 aa).

An N-terminal signal peptide occupies residues 1–22 (MDSLIKLFFCLFIFLCTSLLFG). S50 serves as the catalytic Nucleophile. N-linked (GlcNAc...) asparagine glycans are attached at residues N136, N236, and N259. Residues D332 and H335 contribute to the active site.

The protein belongs to the 'GDSL' lipolytic enzyme family.

The protein resides in the secreted. This Arabidopsis thaliana (Mouse-ear cress) protein is GDSL esterase/lipase At5g03610.